Consider the following 293-residue polypeptide: Xyloglucan endotransglucosylase/hydrolase protein 31 (293 aa).

An N-terminal signal peptide occupies residues 1 to 20 (MALSLIFLALLVLCPSSGHS). The GH16 domain occupies 29–230 (YPSSRVPTSP…YRYQPFVAKY (202 aa)). Glu-114 (nucleophile) is an active-site residue. Glu-118 acts as the Proton donor in catalysis. Xyloglucan contacts are provided by residues Glu-118, 131–133 (QTN), 141–148 (DRNVIGRE), and 209–210 (DW). Cystine bridges form between Cys-238–Cys-246 and Cys-280–Cys-293. Arg-285 provides a ligand contact to xyloglucan.

The protein belongs to the glycosyl hydrolase 16 family. XTH group 3 subfamily. As to quaternary structure, interacts with XTH17. The formation of an XTH17-XTH31 dimer may be required for XET activity. In terms of processing, contains at least one intrachain disulfide bond essential for its enzymatic activity. As to expression, predominantly expressed in root. Weakly expressed in influorescence stems. Expressed in root tips and elongation zones, stems, young leaves, flowers and siliques. Expressed in root, hypocotyl, and etiolated whole seedlings.

Its subcellular location is the secreted. The protein localises to the cell wall. It is found in the extracellular space. It localises to the apoplast. The protein resides in the cell membrane. It carries out the reaction breaks a beta-(1-&gt;4) bond in the backbone of a xyloglucan and transfers the xyloglucanyl segment on to O-4 of the non-reducing terminal glucose residue of an acceptor, which can be a xyloglucan or an oligosaccharide of xyloglucan.. The enzyme catalyses xyloglucan + H2O = xyloglucan oligosaccharides.. Functionally, catalyzes xyloglucan endohydrolysis (XEH) and/or endotransglycosylation (XET). Cleaves and religates xyloglucan polymers, an essential constituent of the primary cell wall, and thereby participates in cell wall construction of growing tissues. Involved in the accumulation of hemicelluloses. Has a high XEH activity and only a slight XET activity in vitro, but the main in planta activity seems to be XET, thus controlling aluminum sensitivity. Acceptor preferences are XXXGol = XXFGol &gt; XXLGol &gt; XLLGol = XLFGol. This is Xyloglucan endotransglucosylase/hydrolase protein 31 from Arabidopsis thaliana (Mouse-ear cress).